A 192-amino-acid chain; its full sequence is Adenylate kinase (192 aa).

Gly-12–Thr-17 is a binding site for ATP. The NMP stretch occupies residues Ser-34–Val-63. Residues Thr-35, Arg-40, Asn-61–Val-63, Gly-88–Arg-91, and Gln-95 each bind AMP. Residues Gly-130–Asp-136 form an LID region. Arg-131 contributes to the ATP binding site. AMP-binding residues include Arg-133 and Arg-145. ATP is bound at residue Arg-173.

This sequence belongs to the adenylate kinase family. As to quaternary structure, monomer.

It localises to the cytoplasm. The enzyme catalyses AMP + ATP = 2 ADP. Its pathway is purine metabolism; AMP biosynthesis via salvage pathway; AMP from ADP: step 1/1. Catalyzes the reversible transfer of the terminal phosphate group between ATP and AMP. Plays an important role in cellular energy homeostasis and in adenine nucleotide metabolism. The sequence is that of Adenylate kinase from Nautilia profundicola (strain ATCC BAA-1463 / DSM 18972 / AmH).